We begin with the raw amino-acid sequence, 416 residues long: PDZ and LIM domain protein 7 (416 aa).

In terms of domain architecture, PDZ spans 1–85; it reads MESYKVMLNG…RLCLTLSRAQ (85 aa). Disordered regions lie at residues 145–191 and 202–221; these read CTPQ…AVDP and TSTV…MQNR. Positions 168 to 181 are enriched in low complexity; it reads PGLAPRTPAATPGP. LIM zinc-binding domains lie at 239-297, 298-357, and 358-416; these read PLCY…TRYA, PSCA…MFGT, and KCRG…FSHV.

As to quaternary structure, interacts with various PKC isoforms through the LIM zinc-binding domains. Interacts with TPM2. Interacts with TBX4 and TBX5.

It localises to the cytoplasm. The protein localises to the cytoskeleton. It is found in the myofibril. Its subcellular location is the sarcomere. The protein resides in the z line. In terms of biological role, may function as a scaffold on which the coordinated assembly of proteins can occur. May play a role as an adapter that, via its PDZ domain, localizes LIM-binding proteins to actin filaments of both skeletal muscle and nonmuscle tissues. May be involved in bone formation. This chain is PDZ and LIM domain protein 7 (PDLIM7), found in Gallus gallus (Chicken).